Here is a 396-residue protein sequence, read N- to C-terminus: Elongation factor Tu (396 aa).

The 196-residue stretch at 10–205 (KPHVNIGTIG…ACDDSIPDPE (196 aa)) folds into the tr-type G domain. The interval 19–26 (GHVDHGKT) is G1. A GTP-binding site is contributed by 19-26 (GHVDHGKT). T26 is a binding site for Mg(2+). The interval 62–66 (GITIN) is G2. The interval 83-86 (DAPG) is G3. Residues 83-87 (DAPGH) and 138-141 (NKCD) each bind GTP. The tract at residues 138–141 (NKCD) is G4. Residues 175–177 (SAL) form a G5 region.

Belongs to the TRAFAC class translation factor GTPase superfamily. Classic translation factor GTPase family. EF-Tu/EF-1A subfamily. As to quaternary structure, monomer.

It localises to the cytoplasm. It carries out the reaction GTP + H2O = GDP + phosphate + H(+). Functionally, GTP hydrolase that promotes the GTP-dependent binding of aminoacyl-tRNA to the A-site of ribosomes during protein biosynthesis. This is Elongation factor Tu from Corynebacterium aurimucosum (strain ATCC 700975 / DSM 44827 / CIP 107346 / CN-1) (Corynebacterium nigricans).